A 232-amino-acid polypeptide reads, in one-letter code: Orotidine 5'-phosphate decarboxylase (232 aa).

Substrate-binding positions include Asp11, Lys33, 61-70 (DMKLFDIGAT), Thr116, Arg179, Gln188, Gly208, and Arg209. The active-site Proton donor is the Lys63.

Belongs to the OMP decarboxylase family. Type 1 subfamily. As to quaternary structure, homodimer.

The enzyme catalyses orotidine 5'-phosphate + H(+) = UMP + CO2. It participates in pyrimidine metabolism; UMP biosynthesis via de novo pathway; UMP from orotate: step 2/2. In terms of biological role, catalyzes the decarboxylation of orotidine 5'-monophosphate (OMP) to uridine 5'-monophosphate (UMP). This is Orotidine 5'-phosphate decarboxylase from Cereibacter sphaeroides (strain ATCC 17023 / DSM 158 / JCM 6121 / CCUG 31486 / LMG 2827 / NBRC 12203 / NCIMB 8253 / ATH 2.4.1.) (Rhodobacter sphaeroides).